The sequence spans 241 residues: MLTRKIKLWDINAHITCRLCSGYLIDATTVTECLHTFCRSCLVKYLEENNTCPTCRIVIHQSHPLQYIGHDRTMQDIVYKLVPGLQEAEMRKQREFYHKLGMEVPGDIKGEACSAKQHLDPRNGETKADDNSNKETAEEKQEEDNDYHRSDEQVSICLECNSSKLRGLKRKWIRCSAQATVLHLKKFIAKKLNLSSFNELDILCNEEILGKDHTLKFVVVTRWRFKKAPLLLHYRPKMDLL.

The RING-type zinc-finger motif lies at 17–56 (CRLCSGYLIDATTVTECLHTFCRSCLVKYLEENNTCPTCR). The interval 115 to 148 (AKQHLDPRNGETKADDNSNKETAEEKQEEDNDYH) is disordered. The span at 117–139 (QHLDPRNGETKADDNSNKETAEE) shows a compositional bias: basic and acidic residues. The interval 131 to 241 (NSNKETAEEK…LHYRPKMDLL (111 aa)) is interaction with BCORL1.

Component of a PRC1-like complex that contains PCGF3, RNF2 and RYBP. Interacts with RNF2. Interacts with CBX6, CBX7 and CBX8. Interacts with BCORL1.

The protein resides in the nucleus. It localises to the nucleoplasm. In terms of biological role, component of a Polycomb group (PcG) multiprotein PRC1-like complex, a complex class required to maintain the transcriptionally repressive state of many genes, including Hox genes, throughout development. PcG PRC1 complex acts via chromatin remodeling and modification of histones; it mediates monoubiquitination of histone H2A 'Lys-119', rendering chromatin heritably changed in its expressibility. Within the PRC1-like complex, regulates RNF2 ubiquitin ligase activity. Plays a redundant role with PCGF5 as part of a PRC1-like complex that mediates monoubiquitination of histone H2A 'Lys-119' on the X chromosome and is required for normal silencing of one copy of the X chromosome in XX females. This Mus musculus (Mouse) protein is Polycomb group RING finger protein 3 (PcgF3).